The primary structure comprises 637 residues: Phospholipase B (637 aa).

Positions 1–19 (MSIATATFAFSLFATIAFA) are cleaved as a signal peptide. Positions 46–572 (DCPSNVTWIR…DTWCWAGDDN (527 aa)) constitute a PLA2c domain. Asn50, Asn56, Asn122, Asn231, Asn246, Asn272, Asn314, Asn343, Asn387, Asn433, Asn481, Asn501, Asn528, Asn553, Asn572, Asn594, and Asn606 each carry an N-linked (GlcNAc...) asparagine glycan.

It belongs to the lysophospholipase family. In terms of processing, N-glycosylated.

It localises to the secreted. The protein localises to the cell membrane. The enzyme catalyses a 1-acyl-sn-glycero-3-phosphocholine + H2O = sn-glycerol 3-phosphocholine + a fatty acid + H(+). Its activity is regulated as follows. Inhibited by Fe(3+) ion. Exhibits phospholipase B (PLB), lysophospholipase (LPL) and lysophospholipase/transacylase (LPTA) activities. The chain is Phospholipase B (PLB1) from Cryptococcus neoformans var. grubii serotype A (strain H99 / ATCC 208821 / CBS 10515 / FGSC 9487) (Filobasidiella neoformans var. grubii).